The sequence spans 475 residues: tRNA-2-methylthio-N(6)-dimethylallyladenosine synthase (475 aa).

Positions 3 to 120 (KKLHIKTWGC…LPEMIDQIRA (118 aa)) constitute an MTTase N-terminal domain. [4Fe-4S] cluster is bound by residues C12, C49, C83, C157, C161, and C164. Residues 143–375 (RADGPSAFVS…QDRITQQAMR (233 aa)) enclose the Radical SAM core domain. In terms of domain architecture, TRAM spans 378–441 (RQMVGTVQRI…TNSLRGVFIR (64 aa)).

This sequence belongs to the methylthiotransferase family. MiaB subfamily. Monomer. The cofactor is [4Fe-4S] cluster.

It localises to the cytoplasm. It carries out the reaction N(6)-dimethylallyladenosine(37) in tRNA + (sulfur carrier)-SH + AH2 + 2 S-adenosyl-L-methionine = 2-methylsulfanyl-N(6)-dimethylallyladenosine(37) in tRNA + (sulfur carrier)-H + 5'-deoxyadenosine + L-methionine + A + S-adenosyl-L-homocysteine + 2 H(+). In terms of biological role, catalyzes the methylthiolation of N6-(dimethylallyl)adenosine (i(6)A), leading to the formation of 2-methylthio-N6-(dimethylallyl)adenosine (ms(2)i(6)A) at position 37 in tRNAs that read codons beginning with uridine. The sequence is that of tRNA-2-methylthio-N(6)-dimethylallyladenosine synthase from Shewanella halifaxensis (strain HAW-EB4).